The following is a 173-amino-acid chain: N-alpha-acetyltransferase 20 (173 aa).

In terms of domain architecture, N-acetyltransferase spans 2–151 (TTIRRFVCDD…DALDMRKALP (150 aa)).

It belongs to the acetyltransferase family. ARD1 subfamily.

Seems to be involved in N-acetylation. The chain is N-alpha-acetyltransferase 20 (nat5) from Dictyostelium discoideum (Social amoeba).